The sequence spans 61 residues: Metallothionein-1H (61 aa).

Met1 is modified (N-acetylmethionine). Positions 1 to 29 (MDPNCSCEAGGSCACAGSCKCKKCKCTSC) are beta. Cys5, Cys7, Cys13, Cys15, Cys19, Cys21, Cys24, Cys26, Cys29, Cys33, Cys34, Cys36, Cys37, Cys41, Cys44, Cys48, Cys50, and Cys57 together coordinate a divalent metal cation. Residues 30 to 61 (KKSCCSCCPLGCAKCAQGCICKGASEKCSCCA) form an alpha region. Position 58 is a phosphoserine (Ser58). Residues Cys59 and Cys60 each contribute to the a divalent metal cation site.

It belongs to the metallothionein superfamily. Type 1 family. As to quaternary structure, monomer.

Its function is as follows. Metallothioneins have a high content of cysteine residues that bind various heavy metals; these proteins are transcriptionally regulated by both heavy metals and glucocorticoids. In Homo sapiens (Human), this protein is Metallothionein-1H (MT1H).